The chain runs to 323 residues: Polycomb complex protein BMI-1-B (323 aa).

An RING-type zinc finger spans residues 18 to 57 (CVLCGGYFIDAATIIECLHSFCKTCIVRYLETSKYCPICD). A Nuclear localization signal motif is present at residues 81 to 95 (KLVPGLFKGEMKRRR). The interval 238–310 (PHTDRINNTS…HQNPFANRAR (73 aa)) is disordered. Low complexity predominate over residues 287 to 301 (HISSTINGTNSSSSH).

As to quaternary structure, component of a PRC1-like complex. Interacts with cbx4.

It is found in the nucleus. Functionally, component of a Polycomb group (PcG) multiprotein PRC1-like complex, a complex class required to maintain the transcriptionally repressive state of many genes, including Hox genes, throughout development. PcG PRC1 complex acts via chromatin remodeling and modification of histones; it mediates monoubiquitination of histone H2A 'Lys-119', rendering chromatin heritably changed in its expressibility. In the PRC1 complex, it is required to stimulate the E3 ubiquitin-protein ligase activity of rnf2. This is Polycomb complex protein BMI-1-B (bmi1b) from Xenopus laevis (African clawed frog).